A 124-amino-acid chain; its full sequence is Large ribosomal subunit protein bL12 (124 aa).

The protein belongs to the bacterial ribosomal protein bL12 family. Homodimer. Part of the ribosomal stalk of the 50S ribosomal subunit. Forms a multimeric L10(L12)X complex, where L10 forms an elongated spine to which 2 to 4 L12 dimers bind in a sequential fashion. Binds GTP-bound translation factors.

In terms of biological role, forms part of the ribosomal stalk which helps the ribosome interact with GTP-bound translation factors. Is thus essential for accurate translation. In Phytoplasma australiense, this protein is Large ribosomal subunit protein bL12.